The chain runs to 89 residues: Ribonuclease P protein component 1 (89 aa).

Belongs to the eukaryotic/archaeal RNase P protein component 1 family. As to quaternary structure, consists of a catalytic RNA component and at least 4-5 protein subunits.

The protein localises to the cytoplasm. The enzyme catalyses Endonucleolytic cleavage of RNA, removing 5'-extranucleotides from tRNA precursor.. Part of ribonuclease P, a protein complex that generates mature tRNA molecules by cleaving their 5'-ends. The polypeptide is Ribonuclease P protein component 1 (Thermoplasma volcanium (strain ATCC 51530 / DSM 4299 / JCM 9571 / NBRC 15438 / GSS1)).